The following is a 141-amino-acid chain: Nucleoside diphosphate kinase (141 aa).

Residues Lys11, Phe59, Arg87, Thr93, Arg104, and Asn114 each coordinate ATP. His117 (pros-phosphohistidine intermediate) is an active-site residue.

The protein belongs to the NDK family. As to quaternary structure, homotetramer. Requires Mg(2+) as cofactor.

It localises to the cytoplasm. It carries out the reaction a 2'-deoxyribonucleoside 5'-diphosphate + ATP = a 2'-deoxyribonucleoside 5'-triphosphate + ADP. The enzyme catalyses a ribonucleoside 5'-diphosphate + ATP = a ribonucleoside 5'-triphosphate + ADP. Its function is as follows. Major role in the synthesis of nucleoside triphosphates other than ATP. The ATP gamma phosphate is transferred to the NDP beta phosphate via a ping-pong mechanism, using a phosphorylated active-site intermediate. The chain is Nucleoside diphosphate kinase from Cupriavidus metallidurans (strain ATCC 43123 / DSM 2839 / NBRC 102507 / CH34) (Ralstonia metallidurans).